We begin with the raw amino-acid sequence, 387 residues long: uncharacterized protein (387 aa).

It belongs to the geranylgeranyl reductase family. ChlP subfamily.

This is an uncharacterized protein from Methanocaldococcus jannaschii (strain ATCC 43067 / DSM 2661 / JAL-1 / JCM 10045 / NBRC 100440) (Methanococcus jannaschii).